The primary structure comprises 216 residues: Kynurenine formamidase (216 aa).

Residue Trp25 coordinates substrate. Residues His55, His59, and Asp61 each coordinate Zn(2+). His65 functions as the Proton donor/acceptor in the catalytic mechanism. Zn(2+) contacts are provided by His167 and Glu179.

The protein belongs to the Cyclase 1 superfamily. KynB family. As to quaternary structure, homodimer. Zn(2+) serves as cofactor.

It catalyses the reaction N-formyl-L-kynurenine + H2O = L-kynurenine + formate + H(+). Its pathway is amino-acid degradation; L-tryptophan degradation via kynurenine pathway; L-kynurenine from L-tryptophan: step 2/2. Functionally, catalyzes the hydrolysis of N-formyl-L-kynurenine to L-kynurenine, the second step in the kynurenine pathway of tryptophan degradation. The sequence is that of Kynurenine formamidase from Cupriavidus necator (strain ATCC 17699 / DSM 428 / KCTC 22496 / NCIMB 10442 / H16 / Stanier 337) (Ralstonia eutropha).